The primary structure comprises 453 residues: Bifunctional protein GlmU (453 aa).

Positions 1 to 226 (MSLNVVILAA…AMEVEGANNR (226 aa)) are pyrophosphorylase. UDP-N-acetyl-alpha-D-glucosamine-binding positions include 8 to 11 (LAAG), K22, Q73, 78 to 79 (GT), 100 to 102 (YGD), G137, E151, N166, and N224. A Mg(2+)-binding site is contributed by D102. Mg(2+) is bound at residue N224. Residues 227–247 (VQLAQLERSYQKMQAERLMIA) are linker. The tract at residues 248–453 (GATLIDPARF…QNWARPVKKK (206 aa)) is N-acetyltransferase. The UDP-N-acetyl-alpha-D-glucosamine site is built by R330 and K348. The active-site Proton acceptor is the H360. Residues Y363 and N374 each contribute to the UDP-N-acetyl-alpha-D-glucosamine site. Residues A377, 383 to 384 (NY), S402, A420, and R437 contribute to the acetyl-CoA site.

It in the N-terminal section; belongs to the N-acetylglucosamine-1-phosphate uridyltransferase family. This sequence in the C-terminal section; belongs to the transferase hexapeptide repeat family. In terms of assembly, homotrimer. Requires Mg(2+) as cofactor.

Its subcellular location is the cytoplasm. The catalysed reaction is alpha-D-glucosamine 1-phosphate + acetyl-CoA = N-acetyl-alpha-D-glucosamine 1-phosphate + CoA + H(+). It carries out the reaction N-acetyl-alpha-D-glucosamine 1-phosphate + UTP + H(+) = UDP-N-acetyl-alpha-D-glucosamine + diphosphate. Its pathway is nucleotide-sugar biosynthesis; UDP-N-acetyl-alpha-D-glucosamine biosynthesis; N-acetyl-alpha-D-glucosamine 1-phosphate from alpha-D-glucosamine 6-phosphate (route II): step 2/2. The protein operates within nucleotide-sugar biosynthesis; UDP-N-acetyl-alpha-D-glucosamine biosynthesis; UDP-N-acetyl-alpha-D-glucosamine from N-acetyl-alpha-D-glucosamine 1-phosphate: step 1/1. It participates in bacterial outer membrane biogenesis; LPS lipid A biosynthesis. Functionally, catalyzes the last two sequential reactions in the de novo biosynthetic pathway for UDP-N-acetylglucosamine (UDP-GlcNAc). The C-terminal domain catalyzes the transfer of acetyl group from acetyl coenzyme A to glucosamine-1-phosphate (GlcN-1-P) to produce N-acetylglucosamine-1-phosphate (GlcNAc-1-P), which is converted into UDP-GlcNAc by the transfer of uridine 5-monophosphate (from uridine 5-triphosphate), a reaction catalyzed by the N-terminal domain. The sequence is that of Bifunctional protein GlmU from Aeromonas hydrophila subsp. hydrophila (strain ATCC 7966 / DSM 30187 / BCRC 13018 / CCUG 14551 / JCM 1027 / KCTC 2358 / NCIMB 9240 / NCTC 8049).